The primary structure comprises 237 residues: tRNA(His) guanylyltransferase (237 aa).

Position 2 is an N-acetylalanine (A2). Residues D29 and G30 each coordinate Mg(2+). Positions 32, 33, 34, 44, and 47 each coordinate GTP. D77 contacts Mg(2+).

It belongs to the tRNA(His) guanylyltransferase family. Homotetramer. Requires Mg(2+) as cofactor.

The catalysed reaction is a 5'-end ribonucleotide-tRNA(His) + GTP + ATP + H2O = a 5'-end phospho-guanosine-ribonucleotide-tRNA(His) + AMP + 2 diphosphate + H(+). It catalyses the reaction a 5'-end ribonucleotide-RNA + a ribonucleoside 5'-triphosphate + ATP + H2O = a 5'-end phospho-ribonucleoside-ribonucleotide-RNA + AMP + 2 diphosphate + H(+). In terms of biological role, acts as a tRNA(His) guanylyltransferase that catalyzes 3'-5' addition of a single guanosine residue to the -1 position of tRNA(His), to form a non-Watson-Crick G(-1):A-73 base pair. After addition of G(-1), THG1 removes pyrophosphate from the tRNA 5'-end, generating 5'-monophosphorylated G(-1)-containing tRNA which is important for recognition of tRNA(His) by its cognate histidyl-tRNA synthetase. In addition to the single-G(-1) addition reaction, THG1 polymerizes multiple G residues to the 5'-end of tRNA(His) variants using the 3'-end of the tRNA(His) acceptor stem as a template. The protein is tRNA(His) guanylyltransferase of Saccharomyces cerevisiae (strain ATCC 204508 / S288c) (Baker's yeast).